We begin with the raw amino-acid sequence, 419 residues long: UDP-N-acetylglucosamine 1-carboxyvinyltransferase (419 aa).

22–23 (KN) is a phosphoenolpyruvate binding site. Arg93 contacts UDP-N-acetyl-alpha-D-glucosamine. Cys117 acts as the Proton donor in catalysis. Cys117 carries the post-translational modification 2-(S-cysteinyl)pyruvic acid O-phosphothioketal. Positions 307 and 329 each coordinate UDP-N-acetyl-alpha-D-glucosamine.

The protein belongs to the EPSP synthase family. MurA subfamily.

It localises to the cytoplasm. The catalysed reaction is phosphoenolpyruvate + UDP-N-acetyl-alpha-D-glucosamine = UDP-N-acetyl-3-O-(1-carboxyvinyl)-alpha-D-glucosamine + phosphate. It participates in cell wall biogenesis; peptidoglycan biosynthesis. Its function is as follows. Cell wall formation. Adds enolpyruvyl to UDP-N-acetylglucosamine. This chain is UDP-N-acetylglucosamine 1-carboxyvinyltransferase, found in Shewanella denitrificans (strain OS217 / ATCC BAA-1090 / DSM 15013).